The sequence spans 748 residues: ATP-dependent RNA helicase DRS1 (748 aa).

Disordered regions lie at residues 1–72 (MAVK…PEFQ) and 111–211 (RKGG…EDTK). Positions 18–32 (DSEEDVPDLDASDDE) are enriched in acidic residues. The span at 38 to 52 (VKSSKTKNKSKKKAK) shows a compositional bias: basic residues. The span at 58 to 67 (HLDEDVHEDL) shows a compositional bias: basic and acidic residues. Composition is skewed to acidic residues over residues 124–153 (DAEE…DELA), 168–185 (ENEE…DEDD), and 202–211 (EDEDIEEDTK). The Q motif signature appears at 233 to 261 (KTFNSLSLSRPVLKGLGSLGYTSPSPIQS). The region spanning 264–439 (IPIALLGKDI…SLSLKKPVRI (176 aa)) is the Helicase ATP-binding domain. 277-284 (AVTGSGKT) provides a ligand contact to ATP. A DEAD box motif is present at residues 387 to 390 (DEAD). The region spanning 468–628 (LLYQLIRKLD…TQVEQVNSLI (161 aa)) is the Helicase C-terminal domain. The stretch at 632-667 (GDVVEEIIEEEKQEKEILRAEMELRKGENMLKHKEE) forms a coiled coil. Residues 687 to 748 (KMLQVLAKNK…YGKKGKKGKK (62 aa)) form a disordered region. Positions 694 to 705 (KNKKPINSKKRK) are enriched in basic residues. The span at 720–732 (TQKDRVEYQERQY) shows a compositional bias: basic and acidic residues.

Belongs to the DEAD box helicase family. DDX27/DRS1 subfamily. As to quaternary structure, associates with pre-ribosomal particles.

It localises to the nucleus. It is found in the nucleolus. The catalysed reaction is ATP + H2O = ADP + phosphate + H(+). Its function is as follows. ATP-binding RNA helicase involved in ribosome assembly. This Kluyveromyces lactis (strain ATCC 8585 / CBS 2359 / DSM 70799 / NBRC 1267 / NRRL Y-1140 / WM37) (Yeast) protein is ATP-dependent RNA helicase DRS1 (DRS1).